Here is a 488-residue protein sequence, read N- to C-terminus: 7,8-epoxymelianol synthase CYP88A51 (488 aa).

The helical transmembrane segment at 4 to 24 threads the bilayer; that stretch reads NFLWPMLAMFLGSLVVMFGFL. Cysteine 436 provides a ligand contact to heme.

This sequence belongs to the cytochrome P450 family. It depends on heme as a cofactor. In terms of tissue distribution, accumulates in mature fruits and in juice vesicles.

The protein resides in the membrane. It catalyses the reaction melianol + reduced [NADPH--hemoprotein reductase] + O2 = 7,8-epoxymelianol + oxidized [NADPH--hemoprotein reductase] + H2O + H(+). The protein operates within secondary metabolite biosynthesis; terpenoid biosynthesis. Its function is as follows. Monooxygenase involved in the biosynthesis of limonoids triterpene natural products such as limonin, a compound with insecticidal activity responsible for the bitter taste in citrus. Catalyzes the epoxidation of melianol to produce 7,8-epoxymelianol. This chain is 7,8-epoxymelianol synthase CYP88A51, found in Citrus sinensis (Sweet orange).